A 157-amino-acid polypeptide reads, in one-letter code: Protein Smg (157 aa).

Belongs to the Smg family.

This chain is Protein Smg, found in Escherichia coli O7:K1 (strain IAI39 / ExPEC).